The chain runs to 214 residues: ER lumen protein-retaining receptor 3 (214 aa).

The Lumenal portion of the chain corresponds to 1-4; the sequence is MNVF. Residues 5-24 form a helical membrane-spanning segment; that stretch reads RILGDLSHLLAMILLLVKIW. The Cytoplasmic segment spans residues 25–32; the sequence is RSKSCAGI. A helical membrane pass occupies residues 33–52; it reads SGKSQILFALVFTTRYLDLF. Residues 47–48 form an interaction with the K-D-E-L motif on target proteins region; it reads RY. At 53 to 58 the chain is on the lumenal side; it reads SNFISI. The helical transmembrane segment at 59–79 threads the bilayer; it reads YNTVMKVVFLLCAYVTVYMIY. Residues 80–92 are Cytoplasmic-facing; it reads WKFRKTFDIENDT. The helical transmembrane segment at 93–110 threads the bilayer; the sequence is FRLEFLLVPVTGLSFLVN. The Lumenal segment spans residues 111-116; that stretch reads YSYTPM. Residues 117 to 135 form a helical membrane-spanning segment; it reads EVLWTFSIYLESVAILPQL. The Cytoplasmic portion of the chain corresponds to 136–149; it reads FMISKTGEAETITT. The helical transmembrane segment at 150–168 threads the bilayer; sequence HYLFFLGLYRLLYLANWIR. Positions 159–169 are interaction with the K-D-E-L motif on target proteins; it reads RLLYLANWIRR. Residues 169–178 are Lumenal-facing; that stretch reads RYQTENFYDQ. Residues 179–199 traverse the membrane as a helical segment; it reads ISVVSGVVQTIFYCDFFYLYV. Over 200 to 214 the chain is Cytoplasmic; it reads TKVLKGKKLSLPVPV. Residues 204-207 are important for recycling of cargo proteins with the sequence motif K-D-E-L from the Golgi to the endoplasmic reticulum; that stretch reads KGKK.

Belongs to the ERD2 family.

The protein resides in the endoplasmic reticulum membrane. It localises to the golgi apparatus membrane. It is found in the cytoplasmic vesicle. Its subcellular location is the COPI-coated vesicle membrane. Receptor for the C-terminal sequence motif K-D-E-L that is present on endoplasmic reticulum resident proteins and that mediates their recycling from the Golgi back to the endoplasmic reticulum. The protein is ER lumen protein-retaining receptor 3 (Kdelr3) of Mus musculus (Mouse).